The sequence spans 337 residues: GTP 3',8-cyclase (337 aa).

Residues 17–242 (TFQREYYYLR…RQKDRTDGPA (226 aa)) form the Radical SAM core domain. Residue Arg26 participates in GTP binding. 2 residues coordinate [4Fe-4S] cluster: Cys33 and Cys37. Tyr39 provides a ligand contact to S-adenosyl-L-methionine. Residue Cys40 coordinates [4Fe-4S] cluster. Residue Arg76 coordinates GTP. Position 80 (Gly80) interacts with S-adenosyl-L-methionine. Thr107 lines the GTP pocket. Ser131 provides a ligand contact to S-adenosyl-L-methionine. Residue Lys168 coordinates GTP. S-adenosyl-L-methionine is bound at residue Met202. Cys265 and Cys268 together coordinate [4Fe-4S] cluster. 270-272 (RLR) contacts GTP. Cys282 contributes to the [4Fe-4S] cluster binding site.

This sequence belongs to the radical SAM superfamily. MoaA family. In terms of assembly, monomer and homodimer. [4Fe-4S] cluster is required as a cofactor.

It catalyses the reaction GTP + AH2 + S-adenosyl-L-methionine = (8S)-3',8-cyclo-7,8-dihydroguanosine 5'-triphosphate + 5'-deoxyadenosine + L-methionine + A + H(+). The protein operates within cofactor biosynthesis; molybdopterin biosynthesis. Functionally, catalyzes the cyclization of GTP to (8S)-3',8-cyclo-7,8-dihydroguanosine 5'-triphosphate. This chain is GTP 3',8-cyclase, found in Mannheimia succiniciproducens (strain KCTC 0769BP / MBEL55E).